A 302-amino-acid polypeptide reads, in one-letter code: Putative receptor-like protein 16 (302 aa).

3 LRR repeats span residues 1-19, 20-43, and 45-70; these read MNLTTNGFQRNLPSSLGNM, EMIEFLDISHNSFHGKLPRSFLKG, and DSLIVLKLSHKKLSEEVFPEASNFFS. The LRR 4; degenerate repeat unit spans residues 72–91; sequence LELSMDNNLFTGKIGRGLQS. LRR repeat units follow at residues 92-115, 116-140, 142-164, 166-188, 190-211, 213-234, and 235-258; these read LRSLIMLDISNNNLSGVIPSWFDQ, LQDLHSLQISNNLLEGEVPISLFNM, SLQLLALSANSLSGDLPQAISGY, ALKVLLLRDNNLSGVIPDTLLGK, IIVLDLRNNRLSGNIPEFINTQ, IRILLLRGNNLTGSIPRRLCAV, and RSIHLLDLANNKLNGSIPSCLRNA.

This sequence belongs to the RLP family.

This chain is Putative receptor-like protein 16, found in Arabidopsis thaliana (Mouse-ear cress).